The chain runs to 369 residues: MKSRAAVAFAPGKPLEIVEIDVAPPKKGEVLIKVTHTGVCHTDAFTLSGDDPEGVFPVVLGHEGAGVVVEVGEGVTSVKPGDHVIPLYTAECGECEFCRSGKTNLCVAVRETQGKGLMPDGTTRFSYNGQPLYHYMGCSTFSEYTVVAEVSLAKINPEANHEHVCLLGCGVTTGIGAVHNTAKVQPGDSVAVFGLGAIGLAVVQGARQAKAGRIIAIDTNPKKFELARRFGATDCINPNDYDKPIKDVLLDINKWGIDHTFECIGNVNVMRAALESAHRGWGQSVIIGVAGSGQEISTRPFQLVTGRVWKGSAFGGVKGRSQLPGMVEDAMKGDIDLEPFVTHTMSLDEINDAFDLMHEGKSIRTVIRY.

Residues Cys40, His62, Cys92, Cys95, Cys98, Cys106, and Cys169 each coordinate Zn(2+).

It belongs to the zinc-containing alcohol dehydrogenase family. Class-III subfamily. In terms of assembly, homodimer. It depends on Zn(2+) as a cofactor.

It localises to the cytoplasm. It catalyses the reaction S-(hydroxymethyl)glutathione + NADP(+) = S-formylglutathione + NADPH + H(+). The catalysed reaction is S-(hydroxymethyl)glutathione + NAD(+) = S-formylglutathione + NADH + H(+). The enzyme catalyses a primary alcohol + NAD(+) = an aldehyde + NADH + H(+). It carries out the reaction a secondary alcohol + NAD(+) = a ketone + NADH + H(+). It catalyses the reaction S-nitrosoglutathione + NADH + H(+) = S-(hydroxysulfenamide)glutathione + NAD(+). Functionally, has high formaldehyde dehydrogenase activity in the presence of glutathione and catalyzes the oxidation of normal alcohols in a reaction that is not GSH-dependent. In addition, hemithiolacetals other than those formed from GSH, including omega-thiol fatty acids, also are substrates. Also acts as a S-nitroso-glutathione reductase by catalyzing the NADH-dependent reduction of S-nitrosoglutathione. This Escherichia coli O1:K1 / APEC protein is S-(hydroxymethyl)glutathione dehydrogenase (frmA).